A 201-amino-acid polypeptide reads, in one-letter code: Dephospho-CoA kinase (201 aa).

Residues 3-201 (ILGLTGGIGS…QIDSRVGCKI (199 aa)) enclose the DPCK domain. Position 11-16 (11-16 (GSGKSL)) interacts with ATP.

It belongs to the CoaE family.

It localises to the cytoplasm. The enzyme catalyses 3'-dephospho-CoA + ATP = ADP + CoA + H(+). Its pathway is cofactor biosynthesis; coenzyme A biosynthesis; CoA from (R)-pantothenate: step 5/5. In terms of biological role, catalyzes the phosphorylation of the 3'-hydroxyl group of dephosphocoenzyme A to form coenzyme A. The chain is Dephospho-CoA kinase from Ehrlichia ruminantium (strain Welgevonden).